The following is a 363-amino-acid chain: 3-dehydroquinate synthase (363 aa).

NAD(+) contacts are provided by residues 72-77, 130-131, K142, and K151; these read SGEKEK and TT. Residues E184, H247, and H264 each coordinate Zn(2+).

This sequence belongs to the sugar phosphate cyclases superfamily. Dehydroquinate synthase family. Requires Co(2+) as cofactor. It depends on Zn(2+) as a cofactor. The cofactor is NAD(+).

The protein resides in the cytoplasm. It catalyses the reaction 7-phospho-2-dehydro-3-deoxy-D-arabino-heptonate = 3-dehydroquinate + phosphate. Its pathway is metabolic intermediate biosynthesis; chorismate biosynthesis; chorismate from D-erythrose 4-phosphate and phosphoenolpyruvate: step 2/7. Its function is as follows. Catalyzes the conversion of 3-deoxy-D-arabino-heptulosonate 7-phosphate (DAHP) to dehydroquinate (DHQ). This chain is 3-dehydroquinate synthase, found in Bacillus anthracis (strain A0248).